We begin with the raw amino-acid sequence, 600 residues long: Glutamine--fructose-6-phosphate aminotransferase [isomerizing] (600 aa).

Residue cysteine 2 is the Nucleophile; for GATase activity of the active site. A Glutamine amidotransferase type-2 domain is found at 2–217 (CGIVGYIGQL…DKEMVIVTDD (216 aa)). SIS domains are found at residues 283-422 (IAAA…KNGI) and 452-590 (IARE…VDKP). Lysine 595 (for Fru-6P isomerization activity) is an active-site residue.

Homodimer.

Its subcellular location is the cytoplasm. It carries out the reaction D-fructose 6-phosphate + L-glutamine = D-glucosamine 6-phosphate + L-glutamate. Its function is as follows. Catalyzes the first step in hexosamine metabolism, converting fructose-6P into glucosamine-6P using glutamine as a nitrogen source. This chain is Glutamine--fructose-6-phosphate aminotransferase [isomerizing], found in Bacillus subtilis (strain 168).